The following is a 466-amino-acid chain: Ras-GEF domain-containing family member 1C (466 aa).

2 disordered regions span residues 1-35 and 443-466; these read MPRT…PLLD and SESP…LGKT. Residues 34-164 enclose the N-terminal Ras-GEF domain; that stretch reads LDGAPSSASL…LLQTLHQKLA (131 aa). In terms of domain architecture, Ras-GEF spans 200 to 446; sequence DPYTLAQQLT…YLASYESESP (247 aa).

Functionally, guanine nucleotide exchange factor (GEF). The protein is Ras-GEF domain-containing family member 1C (Rasgef1c) of Mus musculus (Mouse).